Here is a 378-residue protein sequence, read N- to C-terminus: MSKRDYYEVLSVSRDASEREIKKAYKRLAMKFHPDRNPGDKQAEANFKEVKEAYEILTDADKKAAYDQFGHAGVDPNRGGGGFGGNADFGDVFGDVFGDIFGGGRRGGGQRQAARGSDLRYNLELSLEEAVKGLTKELRIPTLAACDSCDGSGAKKGTSPTTCGTCHGQGQVQMRQGFFAVQQACPTCHGRGKIIKDPCNKCHGEGRVEKSKTLSVKIPAGVDNGDRIRLSGEGEAGEFGAPPGDLYVQVSVREHTIFVRDGNNLYCEVPISFSKAALGGEIEVPTLDGKVNLKIPAETQTGRMFRMRGKGVKSVRSHAVGDLLCKVVMETPVKLNERQKELLREFDETLTGSSSKKHSPKAEGFFDGVKKFFQDLNS.

Residues 5–70 (DYYEVLSVSR…DKKAAYDQFG (66 aa)) form the J domain. A CR-type zinc finger spans residues 133–211 (GLTKELRIPT…CHGEGRVEKS (79 aa)). C146, C149, C163, C166, C185, C188, C199, and C202 together coordinate Zn(2+). CXXCXGXG motif repeat units follow at residues 146–153 (CDSCDGSG), 163–170 (CGTCHGQG), 185–192 (CPTCHGRG), and 199–206 (CNKCHGEG).

Belongs to the DnaJ family. Homodimer. Zn(2+) serves as cofactor.

It is found in the cytoplasm. Functionally, participates actively in the response to hyperosmotic and heat shock by preventing the aggregation of stress-denatured proteins and by disaggregating proteins, also in an autonomous, DnaK-independent fashion. Unfolded proteins bind initially to DnaJ; upon interaction with the DnaJ-bound protein, DnaK hydrolyzes its bound ATP, resulting in the formation of a stable complex. GrpE releases ADP from DnaK; ATP binding to DnaK triggers the release of the substrate protein, thus completing the reaction cycle. Several rounds of ATP-dependent interactions between DnaJ, DnaK and GrpE are required for fully efficient folding. Also involved, together with DnaK and GrpE, in the DNA replication of plasmids through activation of initiation proteins. The chain is Chaperone protein DnaJ from Shewanella sediminis (strain HAW-EB3).